A 678-amino-acid chain; its full sequence is Penicillin-binding protein activator LpoA (678 aa).

An N-terminal signal peptide occupies residues 1–26; it reads MVPSTFSRLKAARCLPVVLAALIFAG. The N-palmitoyl cysteine moiety is linked to residue Cys27. Cys27 is lipidated: S-diacylglycerol cysteine. Low complexity-rich tracts occupy residues 300–310, 330–340, and 513–528; these read AADVAEQPQPQ, QPAAQPVPVSA, and TTNN…DDQF. Disordered stretches follow at residues 300–340 and 496–528; these read AADV…PVSA and ALTG…DDQF.

Belongs to the LpoA family. As to quaternary structure, interacts with PBP1a.

Its subcellular location is the cell outer membrane. In terms of biological role, regulator of peptidoglycan synthesis that is essential for the function of penicillin-binding protein 1A (PBP1a). The protein is Penicillin-binding protein activator LpoA of Shigella flexneri serotype 5b (strain 8401).